A 178-amino-acid polypeptide reads, in one-letter code: Cytidylate kinase (178 aa).

7–15 (GLPGTGTTT) contacts ATP.

Belongs to the cytidylate kinase family. Type 2 subfamily.

The protein localises to the cytoplasm. It catalyses the reaction CMP + ATP = CDP + ADP. The enzyme catalyses dCMP + ATP = dCDP + ADP. The sequence is that of Cytidylate kinase from Methanococcus maripaludis (strain C5 / ATCC BAA-1333).